A 602-amino-acid polypeptide reads, in one-letter code: Aspartate--tRNA(Asp/Asn) ligase (602 aa).

E176 serves as a coordination point for L-aspartate. The aspartate stretch occupies residues 200-203 (QQFK). Residues R222 and H452 each contribute to the L-aspartate site. 222–224 (RDE) contributes to the ATP binding site. An ATP-binding site is contributed by E490. L-aspartate is bound at residue R497. 542 to 545 (GIDR) contributes to the ATP binding site.

Belongs to the class-II aminoacyl-tRNA synthetase family. Type 1 subfamily. In terms of assembly, homodimer.

It is found in the cytoplasm. It catalyses the reaction tRNA(Asx) + L-aspartate + ATP = L-aspartyl-tRNA(Asx) + AMP + diphosphate. Its function is as follows. Aspartyl-tRNA synthetase with relaxed tRNA specificity since it is able to aspartylate not only its cognate tRNA(Asp) but also tRNA(Asn). Reaction proceeds in two steps: L-aspartate is first activated by ATP to form Asp-AMP and then transferred to the acceptor end of tRNA(Asp/Asn). In Rickettsia africae (strain ESF-5), this protein is Aspartate--tRNA(Asp/Asn) ligase.